Here is a 626-residue protein sequence, read N- to C-terminus: Chaperone protein HtpG (626 aa).

An a; substrate-binding region spans residues 1–341; it reads MAKKEFKAES…SEDLSLNISR (341 aa). Positions 342-552 are b; it reads EMLQHDRQLK…DGEVTIEMEK (211 aa). Residues 553–626 are c; sequence ILNAMPDSQN…FTNNICKVMV (74 aa).

This sequence belongs to the heat shock protein 90 family. Homodimer.

Its subcellular location is the cytoplasm. Its function is as follows. Molecular chaperone. Has ATPase activity. The protein is Chaperone protein HtpG of Bacillus subtilis (strain 168).